We begin with the raw amino-acid sequence, 201 residues long: Small ribosomal subunit protein uS4c (201 aa).

The 64-residue stretch at 89–152 (MRLDNILFRL…NSRTLVQNLL (64 aa)) folds into the S4 RNA-binding domain.

Belongs to the universal ribosomal protein uS4 family. In terms of assembly, part of the 30S ribosomal subunit. Contacts protein S5. The interaction surface between S4 and S5 is involved in control of translational fidelity.

The protein resides in the plastid. Its subcellular location is the chloroplast. Its function is as follows. One of the primary rRNA binding proteins, it binds directly to 16S rRNA where it nucleates assembly of the body of the 30S subunit. Functionally, with S5 and S12 plays an important role in translational accuracy. This chain is Small ribosomal subunit protein uS4c (rps4), found in Arabidopsis thaliana (Mouse-ear cress).